The following is a 401-amino-acid chain: Argininosuccinate synthase (401 aa).

8–16 (AYSGGLDTS) lines the ATP pocket. Tyr87 provides a ligand contact to L-citrulline. Gly117 is a binding site for ATP. L-aspartate-binding residues include Thr119, Asn123, and Asp124. An L-citrulline-binding site is contributed by Asn123. Residues Arg127, Ser175, Glu259, and Tyr271 each coordinate L-citrulline.

It belongs to the argininosuccinate synthase family. Type 1 subfamily. In terms of assembly, homotetramer.

The protein localises to the cytoplasm. The enzyme catalyses L-citrulline + L-aspartate + ATP = 2-(N(omega)-L-arginino)succinate + AMP + diphosphate + H(+). Its pathway is amino-acid biosynthesis; L-arginine biosynthesis; L-arginine from L-ornithine and carbamoyl phosphate: step 2/3. The polypeptide is Argininosuccinate synthase (Arthrobacter sp. (strain FB24)).